Here is a 440-residue protein sequence, read N- to C-terminus: Ribulose bisphosphate carboxylase large chain (440 aa).

At K3 the chain carries N6,N6,N6-trimethyllysine. 2 residues coordinate substrate: N112 and T162. K164 serves as the catalytic Proton acceptor. K166 contributes to the substrate binding site. Residues K190, D192, and E193 each coordinate Mg(2+). K190 carries the post-translational modification N6-carboxylysine. H283 functions as the Proton acceptor in the catalytic mechanism. R284, H316, and S368 together coordinate substrate.

Belongs to the RuBisCO large chain family. Type I subfamily. As to quaternary structure, heterohexadecamer of 8 large chains and 8 small chains; disulfide-linked. The disulfide link is formed within the large subunit homodimers. Mg(2+) is required as a cofactor. In terms of processing, the disulfide bond which can form in the large chain dimeric partners within the hexadecamer appears to be associated with oxidative stress and protein turnover.

It is found in the plastid. The protein resides in the chloroplast. The enzyme catalyses 2 (2R)-3-phosphoglycerate + 2 H(+) = D-ribulose 1,5-bisphosphate + CO2 + H2O. It catalyses the reaction D-ribulose 1,5-bisphosphate + O2 = 2-phosphoglycolate + (2R)-3-phosphoglycerate + 2 H(+). Functionally, ruBisCO catalyzes two reactions: the carboxylation of D-ribulose 1,5-bisphosphate, the primary event in carbon dioxide fixation, as well as the oxidative fragmentation of the pentose substrate in the photorespiration process. Both reactions occur simultaneously and in competition at the same active site. The sequence is that of Ribulose bisphosphate carboxylase large chain from Bambusa multiplex (Hedge bamboo).